The sequence spans 123 residues: UPF0102 protein mma_0204 (123 aa).

Belongs to the UPF0102 family.

This chain is UPF0102 protein mma_0204, found in Janthinobacterium sp. (strain Marseille) (Minibacterium massiliensis).